A 65-amino-acid chain; its full sequence is Large ribosomal subunit protein uL29 (65 aa).

It belongs to the universal ribosomal protein uL29 family.

The polypeptide is Large ribosomal subunit protein uL29 (Natranaerobius thermophilus (strain ATCC BAA-1301 / DSM 18059 / JW/NM-WN-LF)).